We begin with the raw amino-acid sequence, 449 residues long: MANVVVVGAQWGDEGKGKITDLLSEKAHVVVRYQGGVNAGHTLVVGGQTFKLHLIPSGILYPDKRCIIASGTVIDPEVLLAEIDQLHQLGISTDNLFIAETAHVTLPYHRVIDIAEEERRGIYRLGTTGRGIGPTYADKAERMGIRVVDLMYPDQLRERLSWAIPYKNVLLEKIYNLPPLDPEPIIEQYLAYAERLRPYVTDAALLLTQAIEDRENILFEGAQGTLLDLDYGTYPYVTSSHPIAGGACIGAGIGPTSIDRVIGVAKAYTTRVGEGPFPTELKDEIGAYLGATGAEFGTTTGRQRRCGWFDGVIGRYAVRINGLDCLAITKLDVLDGLDEIKVCVAYEYQGREIRHFPSDARVFAQCKPIYETLPGWKCSTKDCRSIQDLPPEAHDYLKFLAQLMQVPIAIVSLGASRDQTIIVEDPIHGPKRALLYPNGGKRAHALMPD.

Residues 12 to 18 (GDEGKGK) and 40 to 42 (GHT) contribute to the GTP site. The Proton acceptor role is filled by Asp-13. Positions 13 and 40 each coordinate Mg(2+). Residues 13 to 16 (DEGK), 38 to 41 (NAGH), Thr-128, Arg-142, Gln-223, Thr-238, and Arg-302 each bind IMP. The active-site Proton donor is His-41. Position 298 to 304 (298 to 304 (TTTGRQR)) interacts with substrate. GTP-binding positions include Arg-304, 330–332 (KLD), and 412–414 (SLG).

The protein belongs to the adenylosuccinate synthetase family. Homodimer. Requires Mg(2+) as cofactor.

It is found in the cytoplasm. The enzyme catalyses IMP + L-aspartate + GTP = N(6)-(1,2-dicarboxyethyl)-AMP + GDP + phosphate + 2 H(+). It functions in the pathway purine metabolism; AMP biosynthesis via de novo pathway; AMP from IMP: step 1/2. In terms of biological role, plays an important role in the de novo pathway of purine nucleotide biosynthesis. Catalyzes the first committed step in the biosynthesis of AMP from IMP. The sequence is that of Adenylosuccinate synthetase from Synechococcus sp. (strain JA-2-3B'a(2-13)) (Cyanobacteria bacterium Yellowstone B-Prime).